We begin with the raw amino-acid sequence, 458 residues long: Secretion-regulating guanine nucleotide exchange factor (458 aa).

RCC1 repeat units follow at residues 15-67 (AALF…VTDG), 68-119 (GDLF…LTEN), 120-171 (GQVL…ATAS), 172-230 (GIVF…LTDA), 231-283 (GEVY…QTET), 284-351 (GKMF…IIGG), and 352-402 (VCYS…LCQL). The interval 420–458 (DAIEDTESQKAMDKERNWKERQSETSTQSQSDWSRNGGL) is disordered. The span at 426–442 (ESQKAMDKERNWKERQS) shows a compositional bias: basic and acidic residues. Ser-427 is modified (phosphoserine).

Interacts with SEC5. The interaction occurs only in the presence of magnesium or manganese and is stimulated by dCTP or GTP.

It localises to the cytoplasm. The protein resides in the nucleus. In terms of biological role, probable guanine nucleotide exchange factor (GEF), which may be involved in the secretion process. The protein is Secretion-regulating guanine nucleotide exchange factor (SERGEF) of Homo sapiens (Human).